A 234-amino-acid chain; its full sequence is UPF0758 protein Smal_0281 (234 aa).

The 123-residue stretch at 103–225 (VGNNPAAVGR…PVSFAERGLL (123 aa)) folds into the MPN domain. Positions 174, 176, and 187 each coordinate Zn(2+). The JAMM motif motif lies at 174–187 (HNHPSGDPEPSSAD).

The protein belongs to the UPF0758 family.

This chain is UPF0758 protein Smal_0281, found in Stenotrophomonas maltophilia (strain R551-3).